Reading from the N-terminus, the 259-residue chain is GTP cyclohydrolase FolE2 (259 aa).

This sequence belongs to the GTP cyclohydrolase IV family.

It carries out the reaction GTP + H2O = 7,8-dihydroneopterin 3'-triphosphate + formate + H(+). It participates in cofactor biosynthesis; 7,8-dihydroneopterin triphosphate biosynthesis; 7,8-dihydroneopterin triphosphate from GTP: step 1/1. In terms of biological role, converts GTP to 7,8-dihydroneopterin triphosphate. This Thermotoga neapolitana (strain ATCC 49049 / DSM 4359 / NBRC 107923 / NS-E) protein is GTP cyclohydrolase FolE2.